Here is a 645-residue protein sequence, read N- to C-terminus: 1,4-alpha-glucan branching enzyme GlgB (645 aa).

Catalysis depends on Asp309, which acts as the Nucleophile. The active-site Proton donor is Glu352. A disordered region spans residues 619-645 (VKTRKGSKKQDGSKTKVRSNVTSRGKR). Polar residues predominate over residues 636–645 (RSNVTSRGKR).

It belongs to the glycosyl hydrolase 13 family. GlgB subfamily. In terms of assembly, monomer.

It catalyses the reaction Transfers a segment of a (1-&gt;4)-alpha-D-glucan chain to a primary hydroxy group in a similar glucan chain.. The protein operates within glycan biosynthesis; glycogen biosynthesis. Catalyzes the formation of the alpha-1,6-glucosidic linkages in glycogen by scission of a 1,4-alpha-linked oligosaccharide from growing alpha-1,4-glucan chains and the subsequent attachment of the oligosaccharide to the alpha-1,6 position. The polypeptide is 1,4-alpha-glucan branching enzyme GlgB (Bacillus cereus (strain AH820)).